The chain runs to 301 residues: GLABROUS1 enhancer-binding protein-like 2 (301 aa).

The interval 1–62 (MATPTELGFS…NTKMASPPSN (62 aa)) is disordered. Residues 44–54 (KKKKKKTKHNT) show a composition bias toward basic residues. The non-canonical leucine-zipper stretch occupies residues 268-289 (LSNEWKALCVEELKLNINKLRF).

The protein belongs to the GeBP family. Homo- and heterodimers. Interacts with GEBP, GPL1 and GPL3. As to expression, expressed in the apical meristem and young leaf primordia. Detected in the vascular tissues of cotyledons and leaves, in hydathodes and in the septun of siliques, but not in roots.

It is found in the nucleus. In terms of biological role, probable transcription factor. May play redundant roles with GEBP and GPL1 in cytokinin responses by regulating the transcript levels of type-A ARR response genes. Involved in stress responses. Plays a repressive role in cell expansion by counteracting the positive role of CPR5 in this process, but does not regulate cell proliferation or endoreduplication. The chain is GLABROUS1 enhancer-binding protein-like 2 from Arabidopsis thaliana (Mouse-ear cress).